A 202-amino-acid polypeptide reads, in one-letter code: ATP-dependent Clp protease proteolytic subunit (202 aa).

Ser-101 (nucleophile) is an active-site residue. The active site involves His-126.

It belongs to the peptidase S14 family. As to quaternary structure, component of the chloroplastic Clp protease core complex.

The protein resides in the plastid. It is found in the chloroplast stroma. It carries out the reaction Hydrolysis of proteins to small peptides in the presence of ATP and magnesium. alpha-casein is the usual test substrate. In the absence of ATP, only oligopeptides shorter than five residues are hydrolyzed (such as succinyl-Leu-Tyr-|-NHMec, and Leu-Tyr-Leu-|-Tyr-Trp, in which cleavage of the -Tyr-|-Leu- and -Tyr-|-Trp bonds also occurs).. Functionally, cleaves peptides in various proteins in a process that requires ATP hydrolysis. Has a chymotrypsin-like activity. Plays a major role in the degradation of misfolded proteins. The sequence is that of ATP-dependent Clp protease proteolytic subunit from Nuphar advena (Common spatterdock).